The chain runs to 423 residues: Glutamine synthetase, chloroplastic (423 aa).

A chloroplast-targeting transit peptide spans 1 to 51; that stretch reads MAQAVVPAMQCRVGVKAAAGRVWSAGRTRTGRGGASPGFKVMAVSTGSTGV. The 81-residue stretch at 70 to 150 folds into the GS beta-grasp domain; the sequence is VIAEYIWVGG…VICDTYTPQG (81 aa). Positions 89-115 are disordered; that stretch reads RTISKPVEDPSELPKWNYDGSSTGQAP. The GS catalytic domain occupies 154–423; that stretch reads PTNKRHRAAQ…LAAKKLALKV (270 aa).

It belongs to the glutamine synthetase family. In terms of assembly, homooctamer.

It is found in the plastid. Its subcellular location is the chloroplast. It carries out the reaction L-glutamate + NH4(+) + ATP = L-glutamine + ADP + phosphate + H(+). Functionally, the light-modulated chloroplast enzyme, encoded by a nuclear gene and expressed primarily in leaves, is responsible for the reassimilation of the ammonia generated by photorespiration. The sequence is that of Glutamine synthetase, chloroplastic (GLN2) from Zea mays (Maize).